The sequence spans 250 residues: Large ribosomal subunit protein uL29m (250 aa).

A mitochondrion-targeting transit peptide spans 1–24; the sequence is MRPGAASIRTTGSVLAFLVPSAQC. The interval 66-86 is disordered; that stretch reads VLSKKGSGDQPPKPVPITEKV.

The protein belongs to the universal ribosomal protein uL29 family. Component of the mitochondrial large ribosomal subunit. Mature mitochondrial ribosomes consist of a small (37S) and a large (54S) subunit. The 37S subunit contains at least 33 different proteins and 1 molecule of RNA (15S). The 54S subunit contains at least 45 different proteins and 1 molecule of RNA (21S).

It localises to the mitochondrion. This Phaeosphaeria nodorum (strain SN15 / ATCC MYA-4574 / FGSC 10173) (Glume blotch fungus) protein is Large ribosomal subunit protein uL29m (MRPL4).